A 475-amino-acid chain; its full sequence is Ribonuclease Y (475 aa).

Residues 34-73 (EFERESRERRNELQRVERRLMQKEESLDKKSETLEQKDDR) form a disordered region. The region spanning 165–228 (TVTVVQLPND…EVARIALEKL (64 aa)) is the KH domain. The region spanning 291–384 (VLKHAIEVSH…VTAADAISAA (94 aa)) is the HD domain.

The protein belongs to the RNase Y family.

In terms of biological role, endoribonuclease that initiates mRNA decay. The polypeptide is Ribonuclease Y (Alkaliphilus metalliredigens (strain QYMF)).